The following is a 447-amino-acid chain: Pyruvate kinase (447 aa).

Arg33 serves as a coordination point for substrate. K(+) contacts are provided by Asn35, Ser37, and Asp61. 35-38 (NMSH) lines the ATP pocket. Arg68 contacts ATP. Glu203 serves as a coordination point for Mg(2+). Substrate contacts are provided by Gly226, Asp227, and Thr259. Position 227 (Asp227) interacts with Mg(2+).

Belongs to the pyruvate kinase family. Homotetramer. The cofactor is Mg(2+). K(+) serves as cofactor.

It catalyses the reaction pyruvate + ATP = phosphoenolpyruvate + ADP + H(+). It functions in the pathway carbohydrate degradation; glycolysis; pyruvate from D-glyceraldehyde 3-phosphate: step 5/5. The sequence is that of Pyruvate kinase from Methanocaldococcus jannaschii (strain ATCC 43067 / DSM 2661 / JAL-1 / JCM 10045 / NBRC 100440) (Methanococcus jannaschii).